A 18562-amino-acid chain; its full sequence is Titin homolog (18562 aa).

The Ig-like 1 domain occupies Pro-90–Thr-176. The tract at residues Arg-384–Glu-404 is disordered. 4 consecutive Ig-like domains span residues Pro-406 to Thr-493, Pro-821 to Asn-913, Pro-943 to Ser-1038, and Pro-1135 to Asp-1225. Cys-842 and Cys-897 are joined by a disulfide. The interval Leu-1336–Asn-1360 is disordered. Residues Pro-1679–Ser-1762 enclose the Ig-like 6 domain. Cysteines 1700 and 1751 form a disulfide. 3 coiled-coil regions span residues Leu-1766–Lys-1786, Gln-2011–Ser-2038, and Ile-2065–Glu-2085. The tract at residues Arg-2155–Ala-2177 is disordered. The segment covering Arg-2163–Pro-2172 has biased composition (basic residues). The stretch at Leu-2205–Leu-2231 forms a coiled coil. 2 disordered regions span residues Ile-2298–Ala-2459 and Lys-2614–Ala-2637. Low complexity predominate over residues Arg-2309–Asn-2323. The segment covering Leu-2324 to Glu-2341 has biased composition (polar residues). Residues Leu-2606 to Glu-2630 are a coiled coil. A compositionally biased stretch (acidic residues) spans Glu-2621–Thr-2636. 2 consecutive Ig-like domains span residues Lys-3095–Tyr-3177 and Thr-3179–Ser-3264. Residues Glu-3362–Ser-3692 are disordered. The span at Ser-3655–Asn-3665 shows a compositional bias: acidic residues. 3 Ig-like domains span residues Pro-3789–Val-3878, Pro-3897–Asp-3985, and Pro-4038–Thr-4125. Cystine bridges form between Cys-3919-Cys-3969 and Cys-4059-Cys-4109. Disordered regions lie at residues Gln-4553 to Thr-4599, Thr-4634 to Glu-4699, Gly-4750 to Val-4814, Pro-4826 to Pro-4855, Ser-4912 to Lys-4931, Pro-4950 to Ser-4969, Pro-4989 to Glu-5216, Gly-5267 to Pro-5294, Pro-5306 to Ser-5325, Pro-5345 to Pro-5372, Gly-5428 to Thr-6101, Val-6127 to Pro-6157, Ser-6214 to Glu-6900, and Ala-6930 to Leu-8453. A compositionally biased stretch (basic and acidic residues) spans Arg-4555–Ser-4577. PVET repeat units lie at residues Thr-4599 to Pro-4626, Val-4627 to Pro-4665, Val-4666 to Thr-4704, Pro-4755 to Pro-4787, Val-4788 to Pro-4826, Val-4827 to Thr-4865, Ala-4917 to Pro-4948, Val-4949 to Pro-4987, Val-4988 to Pro-5026, Val-5027 to Pro-5065, Val-5066 to Pro-5104, Val-5105 to Pro-5143, Val-5144 to Pro-5182, Val-5183 to Thr-5221, Ala-5273 to Pro-5304, Val-5305 to Pro-5343, Val-5344 to Thr-5382, Ala-5434 to Pro-5465, Val-5466 to Pro-5504, Val-5505 to Pro-5543, Val-5544 to Pro-5582, Val-5583 to Pro-5621, Val-5622 to Ser-5660, Val-5661 to Ser-5699, Val-5700 to Pro-5738, Val-5739 to Gln-5777, Val-5778 to Pro-5816, Val-5817 to Pro-5855, Val-5856 to Ser-5894, Val-5895 to Pro-5933, Val-5934 to Gln-5972, Val-5973 to Pro-6011, Val-6012 to Gln-6050, Val-6051 to Ser-6089, Val-6090 to Gln-6128, Val-6129 to Thr-6167, Ala-6219 to Pro-6250, Val-6251 to Pro-6289, Val-6290 to Pro-6328, Val-6329 to Pro-6367, Val-6368 to Pro-6406, Val-6407 to Ser-6445, Val-6446 to Ser-6484, Val-6485 to Pro-6523, Val-6524 to Gln-6562, Val-6563 to Pro-6601, Val-6602 to Pro-6640, Val-6641 to Gln-6679, Val-6680 to Pro-6718, Val-6719 to Ala-6757, Val-6758 to Pro-6796, Val-6797 to Pro-6835, Val-6836 to Pro-6874, Val-6875 to Pro-6913, Val-6914 to Pro-6952, and Val-6953 to Lys-6991. Basic and acidic residues-rich tracts occupy residues Thr-4638–Ser-4651 and Thr-4677–Glu-4691. The segment covering Thr-4960–Ser-4969 has biased composition (basic and acidic residues). Positions Thr-5038–Ser-5051 are enriched in basic and acidic residues. 2 stretches are compositionally biased toward basic and acidic residues: residues Thr-5116–Ser-5129 and Thr-5155–Ser-5168. Positions Ala-5212–Val-5235 form a coiled coil. Residues Thr-5316–Ser-5325 are compositionally biased toward basic and acidic residues. Composition is skewed to basic and acidic residues over residues Thr-5477–Ser-5490 and Thr-5516–Ser-5529. Basic and acidic residues-rich tracts occupy residues Pro-6690–Ser-6704, Pro-6729–Ser-6743, Pro-6768–Ser-6782, Pro-6807–Ser-6821, Pro-6846–Ser-6860, and Pro-6885–Ser-6899. Composition is skewed to basic and acidic residues over residues Glu-6972 to Lys-7606, Leu-7613 to Lys-7630, Leu-7637 to Lys-8062, and Leu-8069 to Leu-8453. Residues Gln-6984–Lys-7812 adopt a coiled-coil conformation. BLUE repeat units follow at residues Glu-6992–Lys-6996, His-6997–Lys-7012, Leu-7013–Lys-7028, Leu-7029–Lys-7044, Leu-7045–Lys-7060, Leu-7061–Lys-7076, Leu-7077–Lys-7092, Leu-7093–Lys-7108, Leu-7109–Lys-7124, Leu-7125–Lys-7140, Leu-7141–Lys-7156, Leu-7157–Lys-7172, Leu-7173–Lys-7188, Leu-7189–Lys-7204, Leu-7205–Lys-7220, Leu-7221–Lys-7236, Leu-7237–Lys-7252, Leu-7253–Lys-7268, Leu-7269–Lys-7284, Leu-7285–Lys-7300, Leu-7301–Lys-7316, Leu-7317–Arg-7332, Leu-7333–Lys-7348, Leu-7349–Lys-7364, Leu-7365–Lys-7380, Leu-7381–Lys-7396, Leu-7397–Lys-7412, Leu-7413–Lys-7428, Leu-7429–Lys-7444, Leu-7445–Lys-7460, Leu-7461–Lys-7476, Leu-7477–Lys-7492, Leu-7493–Lys-7508, Leu-7509–Lys-7524, Leu-7525–Lys-7540, Leu-7541–Lys-7556, Leu-7557–Lys-7572, Leu-7573–Lys-7588, Leu-7589–Asn-7604, Phe-7605–Lys-7620, Leu-7621–Asn-7628, Phe-7629–Lys-7644, Leu-7645–Lys-7652, Leu-7653–Lys-7668, Leu-7669–Lys-7684, Leu-7685–Lys-7700, Leu-7701–Lys-7716, Leu-7717–Lys-7732, Leu-7733–Lys-7748, Leu-7749–Lys-7764, Leu-7765–Lys-7772, Leu-7773–Lys-7788, Leu-7789–Lys-7804, Leu-7805–Lys-7820, Leu-7821–Lys-7836, Leu-7837–Lys-7852, Leu-7853–Lys-7868, Leu-7869–Lys-7884, Leu-7885–Lys-7900, Leu-7901–Lys-7916, Leu-7917–Lys-7932, Leu-7933–Lys-7948, Leu-7949–Lys-7964, Leu-7965–Lys-7980, Leu-7981–Lys-7996, Leu-7997–Lys-8012, Leu-8013–Lys-8028, Leu-8029–Lys-8044, Leu-8045–Asn-8060, Phe-8061–Lys-8076, Leu-8077–Lys-8084, Leu-8085–Lys-8100, Leu-8101–Lys-8116, Leu-8117–Lys-8132, Leu-8133–Lys-8148, Leu-8149–Lys-8164, Leu-8165–Lys-8180, Leu-8181–Lys-8196, Leu-8197–Lys-8212, Leu-8213–Lys-8228, Leu-8229–Lys-8244, Leu-8245–Lys-8260, Leu-8261–Lys-8276, Leu-8277–Lys-8292, Leu-8293–Lys-8308, Leu-8309–Lys-8324, Leu-8325–Lys-8340, Leu-8341–Lys-8356, Leu-8357–Asp-8371, Leu-8373–Lys-8388, Leu-8389–Lys-8404, Leu-8405–Lys-8420, Leu-8421–Lys-8436, Leu-8437–Lys-8452, Leu-8453–Lys-8468, and Leu-8469–Lys-8484. Residues Lys-7876–Lys-8273 are a coiled coil. A coiled-coil region spans residues Lys-8316–Gln-8490. Residues Lys-8599–Glu-8611 are compositionally biased toward basic residues. The segment at Lys-8599–Ser-8626 is disordered. Positions Lys-8612–Ser-8626 are enriched in basic and acidic residues. One can recognise a Fibronectin type-III 1 domain in the interval Lys-8950–Tyr-9041. 20 disordered regions span residues Ile-9079–Glu-9104, Val-9147–Glu-9436, Glu-9481–Ser-9609, Ala-9702–Ile-10224, Glu-10239–Pro-10274, Gln-10539–Thr-11018, Glu-11030–Gln-11111, Lys-11123–Thr-11213, Ala-11225–Ser-11387, Lys-11420–Leu-11592, Leu-11624–Leu-11825, Leu-11872–Ser-11955, Thr-11996–Asn-12054, Gly-12397–Arg-12418, Glu-12537–Ser-12974, Glu-13026–Val-13045, Ala-13065–Lys-13261, Gln-13283–Lys-13514, Glu-13553–Leu-13574, and Glu-13594–Gly-13874. The span at Lys-9084–Lys-9093 shows a compositional bias: basic residues. Composition is skewed to basic and acidic residues over residues Val-9172–Leu-9184 and Thr-9191–Lys-9202. The span at Ser-9213–Gln-9231 shows a compositional bias: polar residues. The span at Ser-9232 to Pro-9267 shows a compositional bias: basic and acidic residues. Residues Ser-9273–Ala-9283 are compositionally biased toward low complexity. Positions Glu-9295–Pro-9332 are enriched in basic and acidic residues. A compositionally biased stretch (low complexity) spans Ser-9346–Ser-9359. Positions Ala-9371–Gln-9510 form a coiled coil. Basic and acidic residues-rich tracts occupy residues Val-9373 to Glu-9436 and Glu-9481 to Lys-9521. Low complexity predominate over residues Ser-9547 to Thr-9558. Residues Thr-9577–Asp-9749 are a coiled coil. Composition is skewed to basic and acidic residues over residues Ser-9578–Ser-9609 and Ala-9702–Pro-9783. The span at Ser-9798–Val-9809 shows a compositional bias: polar residues. Composition is skewed to basic and acidic residues over residues Glu-9819 to Pro-10004, Glu-10040 to Asn-10149, and Val-10162 to Glu-10196. Coiled coils occupy residues Lys-9822 to Ala-9995 and Glu-10046 to Lys-10129. The segment covering Lys-10197–Asp-10206 has biased composition (basic residues). Basic and acidic residues predominate over residues Thr-10207–Ile-10224. Over residues Glu-10239 to Lys-10250 the composition is skewed to polar residues. The region spanning Lys-10461–Glu-10553 is the Fibronectin type-III 2 domain. Residues Glu-10566–Phe-10609 show a composition bias toward basic and acidic residues. Residues Ser-10612–His-10637 show a composition bias toward polar residues. Over residues Ile-10663 to Pro-10680 the composition is skewed to acidic residues. Residues Met-10707–Glu-10716 show a composition bias toward basic and acidic residues. Polar residues predominate over residues Ala-10779 to Asn-10790. Basic and acidic residues-rich tracts occupy residues Gln-10840–Met-10852 and Lys-10863–Asp-10884. Positions Leu-10961 to Gly-10975 are enriched in polar residues. Basic and acidic residues-rich tracts occupy residues Ile-10999–Glu-11009, Ser-11045–Asp-11055, and Ser-11076–Asn-11089. The stretch at Thr-11018–Gln-11064 forms a coiled coil. The segment covering Thr-11090–Gln-11108 has biased composition (polar residues). A compositionally biased stretch (basic and acidic residues) spans Lys-11159–His-11173. Residues Leu-11174 to Thr-11187 are compositionally biased toward low complexity. Basic and acidic residues-rich tracts occupy residues Lys-11195–Asp-11211, Ile-11271–Lys-11280, and Glu-11295–Leu-11318. Residues Ser-11374 to Ser-11387 are compositionally biased toward polar residues. Basic and acidic residues-rich tracts occupy residues Lys-11440–Lys-11464 and Gly-11472–Thr-11485. The segment covering Met-11503 to Ala-11515 has biased composition (polar residues). Composition is skewed to basic and acidic residues over residues Leu-11624–Lys-11635, Ala-11645–Glu-11669, and Val-11722–Val-11735. The span at Glu-11754–Val-11767 shows a compositional bias: polar residues. Positions Ala-11916–Gln-11937 are enriched in basic and acidic residues. A coiled-coil region spans residues Glu-12408–Asn-12428. The region spanning Pro-12432–Asp-12547 is the Ig-like 12 domain. Composition is skewed to basic and acidic residues over residues Glu-12537–Asp-12547, Leu-12555–Lys-12567, and Val-12609–Ala-12689. Over residues Ser-12690–Pro-12701 the composition is skewed to low complexity. A compositionally biased stretch (polar residues) spans Thr-12729–Ile-12740. 3 stretches are compositionally biased toward basic and acidic residues: residues Glu-12766 to Ser-12839, Glu-12852 to Lys-12865, and Pro-12889 to Ser-12940. Positions Lys-12797–Ile-12828 form a coiled coil. The stretch at Ala-12980–Lys-13103 forms a coiled coil. 7 stretches are compositionally biased toward basic and acidic residues: residues Ala-13065–Glu-13124, Pro-13133–Gly-13145, Thr-13176–Thr-13191, Glu-13203–Lys-13261, Gln-13283–Ala-13327, Ala-13337–Lys-13354, and Leu-13361–Pro-13416. Residues Leu-13237–Lys-13380 adopt a coiled-coil conformation. The segment covering Ser-13431–Val-13442 has biased composition (polar residues). Basic and acidic residues predominate over residues Glu-13452–Lys-13514. Positions Lys-13455–Ala-13628 form a coiled coil. The span at Glu-13594–Pro-13637 shows a compositional bias: basic and acidic residues. Residues Ser-13651–Ser-13662 are compositionally biased toward low complexity. Residues Lys-13684–Thr-13696 are compositionally biased toward polar residues. Basic and acidic residues predominate over residues Ile-13697 to Pro-13735. Residues Ser-13747 to Ser-13760 show a composition bias toward low complexity. The segment covering Lys-13761–Pro-13770 has biased composition (basic and acidic residues). Over residues Ser-13784–Asp-13793 the composition is skewed to polar residues. Basic and acidic residues-rich tracts occupy residues Ile-13795 to Glu-13808 and Ser-13824 to Thr-13843. One can recognise an Ig-like 13 domain in the interval Pro-13963–Tyr-14036. 3 consecutive Fibronectin type-III domains span residues Ala-14153–Pro-14247, Val-14253–Gly-14348, and Val-14350–Asp-14448. Ig-like domains are found at residues Pro-14451 to Ser-14542, Ser-14550 to Asn-14634, and Pro-14638 to Glu-14727. A disulfide bridge connects residues Cys-14568 and Cys-14618. Fibronectin type-III domains are found at residues Ala-14826 to Ser-14920 and Ile-14937 to Gly-15027. The tract at residues Val-15011–Lys-15180 is disordered. Basic and acidic residues-rich tracts occupy residues Lys-15034 to Val-15060 and Lys-15085 to Arg-15117. The span at Gly-15118 to Thr-15132 shows a compositional bias: polar residues. Residues Ser-15133–Glu-15177 show a composition bias toward basic and acidic residues. 2 Ig-like domains span residues Lys-15180 to Ala-15274 and Pro-15283 to Arg-15371. 2 Fibronectin type-III domains span residues Pro-15383–Lys-15475 and Gln-15503–Ser-15596. A disordered region spans residues Thr-15470 to Gln-15503. The span at Lys-15473–Gln-15503 shows a compositional bias: basic and acidic residues. Ig-like domains lie at Pro-15599 to Thr-15687 and Pro-15692 to Thr-15786. The region spanning Ala-15791–Asn-15883 is the Fibronectin type-III 10 domain. The Protein kinase domain occupies Tyr-15934–Ile-16189. Residues Leu-15940–Val-15948 and Lys-15963 each bind ATP. The Proton acceptor role is filled by Asp-16055. The tract at residues Lys-16206–Thr-16264 is autoinhibitory domain. Ig-like domains lie at Pro-16268–Ser-16358, Gly-16500–Asn-16575, Pro-16605–Val-16692, and Pro-16705–Thr-16789. 4 disulfides stabilise this stretch: Cys-16290/Cys-16342, Cys-16508/Cys-16571, Cys-16627/Cys-16677, and Cys-16726/Cys-16778. The segment at Leu-16805–Gln-16827 is disordered. Ig-like domains are found at residues Pro-16829–Val-16918, Pro-16932–Ser-17025, and Pro-17037–Ser-17126. The tract at residues Gln-17121–Val-17169 is disordered. Positions Lys-17129 to Lys-17150 are enriched in basic and acidic residues. The region spanning Arg-17154–Val-17245 is the Fibronectin type-III 11 domain. Ig-like domains follow at residues Pro-17249–Thr-17336, Pro-17358–Ala-17447, Pro-17457–Ala-17548, Pro-17570–Ile-17661, Pro-17676–Thr-17765, Pro-17782–Ser-17873, Pro-18008–Asp-18097, Pro-18121–Ser-18213, Pro-18224–Asp-18316, Pro-18329–Thr-18417, and Pro-18429–Ser-18519. 2 disulfide bridges follow: Cys-17379-Cys-17431 and Cys-17478-Cys-17530. A disulfide bond links Cys-17697 and Cys-17754. The cysteines at positions 18143 and 18195 are disulfide-linked.

Belongs to the protein kinase superfamily. CAMK Ser/Thr protein kinase family. As to quaternary structure, interacts (via C-terminus) with myosin. Interacts with actin. The cofactor is Mg(2+). As to expression, expression is restricted to body wall, enteric and vulval muscles.

It localises to the cytoplasm. The protein resides in the myofibril. The protein localises to the sarcomere. It is found in the a band. Its subcellular location is the i band. It localises to the nucleus membrane. It catalyses the reaction L-seryl-[protein] + ATP = O-phospho-L-seryl-[protein] + ADP + H(+). The catalysed reaction is L-threonyl-[protein] + ATP = O-phospho-L-threonyl-[protein] + ADP + H(+). Serine/threonine-protein kinase. Key component in the assembly and functioning of muscles. By providing connections at the level of individual microfilaments, it contributes to the fine balance of forces between the two halves of the sarcomere. The size and extensibility of the cross-links are the main determinants of sarcomere extensibility properties of muscle. In non-muscle cells, seems to play a role in chromosome condensation and chromosome segregation during mitosis. Might link the lamina network to chromatin or nuclear actin, or both during interphase. In Caenorhabditis elegans, this protein is Titin homolog.